Reading from the N-terminus, the 1043-residue chain is NACHT, LRR and PYD domains-containing protein 13 (1043 aa).

In terms of domain architecture, Pyrin spans 1 to 107 (MNFSVITCPN…CEKVRAEMKE (107 aa)). The NACHT domain maps to 229 to 558 (QTIVLVGRAG…VLEEPREFPP (330 aa)). 235–242 (GRAGVGKT) contacts ATP. LRR repeat units lie at residues 725–749 (NENL…LCLA), 781–804 (NSKL…ILKA), 837–864 (IQHV…ALTH), 894–917 (NRSL…FLCE), 923–946 (DGNL…ELAN), 951–978 (NHNV…ALKP), and 1007–1030 (SKSL…MLCK).

It belongs to the NLRP family.

Functionally, involved in inflammation. The chain is NACHT, LRR and PYD domains-containing protein 13 (NLRP13) from Homo sapiens (Human).